A 1381-amino-acid chain; its full sequence is Non-structural polyprotein 1AB (1381 aa).

The stretch at 121–160 forms a coiled coil; it reads VLVQEHKKLDSDLKESRRELSQLKLEHSLLRHDYERLVRE. Transmembrane regions (helical) follow at residues 169–189, 249–269, 279–299, 324–344, and 365–385; these read FKFSAVIFYAFFLGFLLMSAV, LALGYFPYFANWHMAAFLVGT, LYMLVTLVLATLSRFQLVALA, AFAILASVLISVLLLILCLAM, and FSHLVSFLHAPGWFTIIAILI. Active-site charge relay system; for serine protease activity residues include H477, D506, and S569. At Y694 the chain carries O-(5'-phospho-RNA)-tyrosine. A coiled-coil region spans residues 703 to 732; that stretch reads TRDQLREMAEAAREADDDFDDYEEEKNEVD. Residues 856–879 are disordered; sequence MQRKKQKPKKREEGPERGPINPDE. A RdRp catalytic domain is found at 1122–1254; the sequence is SVFIEFDWTR…TFDHVPPDYV (133 aa).

Belongs to the astroviridae polyprotein 1AB family. As to quaternary structure, monomer. Post-translationally, cleaved by the viral and host proteases. The protease is probably autocatalytically cleaved.

The protein resides in the host membrane. The catalysed reaction is RNA(n) + a ribonucleoside 5'-triphosphate = RNA(n+1) + diphosphate. Its function is as follows. Responsible for the cleavage of the polyprotein into functional products. Protein covalently attached to the 5' extremity of the genomic and subgenomic RNAs. It may serve as a primer for the replicase. In Neovison vison (American mink), this protein is Non-structural polyprotein 1AB (ORF1).